Reading from the N-terminus, the 242-residue chain is MKKIIIGNWKMNKTVSETRDFIQKFDIFYQENVGKIKEDLDFAIAPSFISLSLISKSLTKKLEIAAQNLSQFDSGAFTGEISGKMLQDLGTKYVIIGHSERREIFKEKDEELKNKILQAQKYDLIPVFCVGESLLEFEAGLTKKVIISQINAIKSVLNFQKAIIAYEPIWAIGTGKTATAAIAEKVCGMIKENFGKDTTVIYGGSVNSKNINELVSQKSIDGALVGGASLDPEEFGKILVNS.

8-10 (NWK) contacts substrate. The Electrophile role is filled by His-98. The active-site Proton acceptor is the Glu-167. Substrate contacts are provided by residues Gly-173, Ser-205, and 226–227 (GG).

It belongs to the triosephosphate isomerase family. As to quaternary structure, homodimer.

Its subcellular location is the cytoplasm. It catalyses the reaction D-glyceraldehyde 3-phosphate = dihydroxyacetone phosphate. The protein operates within carbohydrate biosynthesis; gluconeogenesis. Its pathway is carbohydrate degradation; glycolysis; D-glyceraldehyde 3-phosphate from glycerone phosphate: step 1/1. Functionally, involved in the gluconeogenesis. Catalyzes stereospecifically the conversion of dihydroxyacetone phosphate (DHAP) to D-glyceraldehyde-3-phosphate (G3P). The chain is Triosephosphate isomerase from Mesomycoplasma hyopneumoniae (strain 7448) (Mycoplasma hyopneumoniae).